Consider the following 473-residue polypeptide: GTPase Der (473 aa).

EngA-type G domains follow at residues 3-167 and 203-378; these read FTVA…GKDR and LRVA…RVWN. Residues 9–16, 56–60, 119–122, 209–216, 256–260, and 321–324 each bind GTP; these read GRPNVGKS, DTAGL, NKSE, GRPNAGKS, DTAGM, and NKWD. One can recognise a KH-like domain in the interval 379 to 463; that stretch reads KRISTARLNR…PIRIHFRSPD (85 aa).

The protein belongs to the TRAFAC class TrmE-Era-EngA-EngB-Septin-like GTPase superfamily. EngA (Der) GTPase family. As to quaternary structure, associates with the 50S ribosomal subunit.

In terms of biological role, GTPase that plays an essential role in the late steps of ribosome biogenesis. In Rhizobium etli (strain ATCC 51251 / DSM 11541 / JCM 21823 / NBRC 15573 / CFN 42), this protein is GTPase Der.